The primary structure comprises 195 residues: Glycerol-3-phosphate acyltransferase (195 aa).

A run of 4 helical transmembrane segments spans residues 2–22 (INLL…SFIV), 79–99 (AALM…LLGF), 111–131 (VALI…VVIL), and 146–166 (TILP…GLVL).

Belongs to the PlsY family. Probably interacts with PlsX.

It localises to the cell membrane. It carries out the reaction an acyl phosphate + sn-glycerol 3-phosphate = a 1-acyl-sn-glycero-3-phosphate + phosphate. It functions in the pathway lipid metabolism; phospholipid metabolism. Its function is as follows. Catalyzes the transfer of an acyl group from acyl-phosphate (acyl-PO(4)) to glycerol-3-phosphate (G3P) to form lysophosphatidic acid (LPA). This enzyme utilizes acyl-phosphate as fatty acyl donor, but not acyl-CoA or acyl-ACP. In Alkaliphilus metalliredigens (strain QYMF), this protein is Glycerol-3-phosphate acyltransferase.